Consider the following 55-residue polypeptide: Large ribosomal subunit protein bL33 (55 aa).

This sequence belongs to the bacterial ribosomal protein bL33 family.

This chain is Large ribosomal subunit protein bL33, found in Methylacidiphilum infernorum (isolate V4) (Methylokorus infernorum (strain V4)).